A 445-amino-acid polypeptide reads, in one-letter code: Phosphoglucosamine mutase 1 (445 aa).

Residue S102 is the Phosphoserine intermediate of the active site. Residues S102, D241, D243, and D245 each contribute to the Mg(2+) site. A Phosphoserine modification is found at S102.

Belongs to the phosphohexose mutase family. The cofactor is Mg(2+). Post-translationally, activated by phosphorylation.

The enzyme catalyses alpha-D-glucosamine 1-phosphate = D-glucosamine 6-phosphate. Catalyzes the conversion of glucosamine-6-phosphate to glucosamine-1-phosphate. In Shewanella sp. (strain MR-7), this protein is Phosphoglucosamine mutase 1.